Here is a 177-residue protein sequence, read N- to C-terminus: Peptide methionine sulfoxide reductase MsrA 2 (177 aa).

Cys12 is a catalytic residue.

Belongs to the MsrA Met sulfoxide reductase family.

It catalyses the reaction L-methionyl-[protein] + [thioredoxin]-disulfide + H2O = L-methionyl-(S)-S-oxide-[protein] + [thioredoxin]-dithiol. It carries out the reaction [thioredoxin]-disulfide + L-methionine + H2O = L-methionine (S)-S-oxide + [thioredoxin]-dithiol. Has an important function as a repair enzyme for proteins that have been inactivated by oxidation. Catalyzes the reversible oxidation-reduction of methionine sulfoxide in proteins to methionine. The chain is Peptide methionine sulfoxide reductase MsrA 2 from Staphylococcus aureus (strain MRSA252).